A 951-amino-acid polypeptide reads, in one-letter code: Bifunctional glutamine synthetase adenylyltransferase/adenylyl-removing enzyme (951 aa).

Residues 1 to 445 (MSILPLPALP…VFDELIGDDA (445 aa)) form an adenylyl removase region. The interval 454–951 (HSSYSSLWQD…VSWNKWLMGA (498 aa)) is adenylyl transferase.

This sequence belongs to the GlnE family. Mg(2+) is required as a cofactor.

It catalyses the reaction [glutamine synthetase]-O(4)-(5'-adenylyl)-L-tyrosine + phosphate = [glutamine synthetase]-L-tyrosine + ADP. The catalysed reaction is [glutamine synthetase]-L-tyrosine + ATP = [glutamine synthetase]-O(4)-(5'-adenylyl)-L-tyrosine + diphosphate. Its function is as follows. Involved in the regulation of glutamine synthetase GlnA, a key enzyme in the process to assimilate ammonia. When cellular nitrogen levels are high, the C-terminal adenylyl transferase (AT) inactivates GlnA by covalent transfer of an adenylyl group from ATP to specific tyrosine residue of GlnA, thus reducing its activity. Conversely, when nitrogen levels are low, the N-terminal adenylyl removase (AR) activates GlnA by removing the adenylyl group by phosphorolysis, increasing its activity. The regulatory region of GlnE binds the signal transduction protein PII (GlnB) which indicates the nitrogen status of the cell. The chain is Bifunctional glutamine synthetase adenylyltransferase/adenylyl-removing enzyme from Pectobacterium atrosepticum (strain SCRI 1043 / ATCC BAA-672) (Erwinia carotovora subsp. atroseptica).